The sequence spans 325 residues: GTP 3',8-cyclase (325 aa).

Positions 1–226 (MNTVNYLRIS…EGACYGNGPA (226 aa)) constitute a Radical SAM core domain. Arginine 8 contributes to the GTP binding site. [4Fe-4S] cluster-binding residues include cysteine 15 and cysteine 19. Position 21 (tyrosine 21) interacts with S-adenosyl-L-methionine. Position 22 (cysteine 22) interacts with [4Fe-4S] cluster. Residue arginine 60 coordinates GTP. Glycine 64 provides a ligand contact to S-adenosyl-L-methionine. Residue serine 91 participates in GTP binding. Serine 115 serves as a coordination point for S-adenosyl-L-methionine. Position 152 (lysine 152) interacts with GTP. Methionine 186 contacts S-adenosyl-L-methionine. [4Fe-4S] cluster contacts are provided by cysteine 249 and cysteine 252. 254–256 (RVR) contributes to the GTP binding site. Cysteine 266 is a binding site for [4Fe-4S] cluster.

It belongs to the radical SAM superfamily. MoaA family. In terms of assembly, monomer and homodimer. It depends on [4Fe-4S] cluster as a cofactor.

The enzyme catalyses GTP + AH2 + S-adenosyl-L-methionine = (8S)-3',8-cyclo-7,8-dihydroguanosine 5'-triphosphate + 5'-deoxyadenosine + L-methionine + A + H(+). The protein operates within cofactor biosynthesis; molybdopterin biosynthesis. Its function is as follows. Catalyzes the cyclization of GTP to (8S)-3',8-cyclo-7,8-dihydroguanosine 5'-triphosphate. This is GTP 3',8-cyclase from Gloeobacter violaceus (strain ATCC 29082 / PCC 7421).